We begin with the raw amino-acid sequence, 260 residues long: Collagenase (260 aa).

The N-terminal stretch at 1–16 (MKFLLVFALALATTSA) is a signal peptide. A propeptide spanning residues 17–30 (FQHPASIFELREGR) is cleaved from the precursor. A Peptidase S1 domain is found at 31–257 (IINGYEAYTG…YMDWIQQNTG (227 aa)). Cys60 and Cys76 are oxidised to a cystine. Catalysis depends on charge relay system residues His75 and Asp118. 2 disulfides stabilise this stretch: Cys181–Cys196 and Cys206–Cys234. The Charge relay system role is filled by Ser210.

Belongs to the peptidase S1 family.

The protein resides in the secreted. It carries out the reaction Hydrolysis of proteins including native collagen at Xaa-|-Ala bond leaving an N-terminal (75%) and a C-terminal (25%) fragment.. Inhibited by diisopropylfluorophosphate. In terms of biological role, this enzyme is a serine protease capable of degrading the native triple helix of collagen. Also cleaves the B chain of insulin at the 15-Leu-|-Try-16 and 22-Arg-|-Gly-23 bonds. Hydrolyzes casein, but not Px-Pro-Leu-Gly-Pro-DArg, BzArgNHPh, AcTyrNHPh, 2-naphthyl phosphate, 2-naphthyl butyrate, 2-naphthyl caprylate, 2-naphthyl myristate, L-leucine 2-2-naphthylamide, L-valine 2-naphthylamide, L-cysteine 2-naphthylamide or L-glutarylphenylalanine 2-naphthylamide. This Hypoderma lineatum (Early cattle grub) protein is Collagenase.